We begin with the raw amino-acid sequence, 324 residues long: Glyoxylate/hydroxypyruvate reductase B (324 aa).

Active-site residues include arginine 237 and glutamate 266. Residue histidine 285 is the Proton donor of the active site.

This sequence belongs to the D-isomer specific 2-hydroxyacid dehydrogenase family. GhrB subfamily. As to quaternary structure, homodimer.

Its subcellular location is the cytoplasm. The catalysed reaction is glycolate + NADP(+) = glyoxylate + NADPH + H(+). It carries out the reaction (R)-glycerate + NAD(+) = 3-hydroxypyruvate + NADH + H(+). It catalyses the reaction (R)-glycerate + NADP(+) = 3-hydroxypyruvate + NADPH + H(+). Catalyzes the NADPH-dependent reduction of glyoxylate and hydroxypyruvate into glycolate and glycerate, respectively. The chain is Glyoxylate/hydroxypyruvate reductase B from Salmonella paratyphi A (strain ATCC 9150 / SARB42).